The primary structure comprises 1153 residues: PPi-type phosphoenolpyruvate carboxykinase 2 (1153 aa).

The stretch at Arg1085–Glu1131 forms a coiled coil.

This sequence belongs to the PPi-type phosphoenolpyruvate carboxykinase family. In terms of assembly, monomer and trimer; forms heterotrimers with PEPCK1 and PEPCK3.

The protein localises to the cytoplasm. Its subcellular location is the cytosol. It carries out the reaction oxaloacetate + diphosphate = phosphoenolpyruvate + phosphate + CO2. Inorganic pyrophosphate (PPi)-dependent phosphoenolpyruvate carboxykinase, which regulates the carbon flow of the central metabolism by fixing CO(2) to phosphoenolpyruvate to produce oxaloacetate. Can also produce pyruvate and diphosphate from phosphoenolpyruvate and phosphate. The polypeptide is PPi-type phosphoenolpyruvate carboxykinase 2 (Entamoeba histolytica (strain ATCC 30459 / HM-1:IMSS / ABRM)).